The sequence spans 284 residues: Diaminopimelate epimerase (284 aa).

Residues Asn13 and Asn70 each contribute to the substrate site. The active-site Proton donor is the Cys79. Substrate contacts are provided by residues 80-81 (GN), Asn167, Asn200, and 218-219 (ER). The Proton acceptor role is filled by Cys227. 228–229 (GT) provides a ligand contact to substrate.

The protein belongs to the diaminopimelate epimerase family. As to quaternary structure, homodimer.

It localises to the cytoplasm. The enzyme catalyses (2S,6S)-2,6-diaminopimelate = meso-2,6-diaminopimelate. It participates in amino-acid biosynthesis; L-lysine biosynthesis via DAP pathway; DL-2,6-diaminopimelate from LL-2,6-diaminopimelate: step 1/1. In terms of biological role, catalyzes the stereoinversion of LL-2,6-diaminopimelate (L,L-DAP) to meso-diaminopimelate (meso-DAP), a precursor of L-lysine and an essential component of the bacterial peptidoglycan. The protein is Diaminopimelate epimerase of Prochlorococcus marinus (strain NATL1A).